The sequence spans 198 residues: Suppressor of cytokine signaling 2 (198 aa).

The tract at residues 1-31 (MTLRCLEPSGNGAEGTQSQWGTSGSAEEPSP) is disordered. The interval 1-75 (MTLRCLEPSG…PEGTFLIRDS (75 aa)) is interaction with AREL1. Polar residues predominate over residues 14 to 25 (EGTQSQWGTSGS). Phosphoserine is present on residues Ser30 and Ser52. Residues 48-156 (WYWGSMTVNE…TVHLYLTKPL (109 aa)) enclose the SH2 domain. The SOCS box domain maps to 151 to 197 (YLTKPLYTSAPPLQHLCRLTINKCTGTIWGLPLPTRLKDYLEEYKFQ). A Glycyl lysine isopeptide (Lys-Gly) (interchain with G-Cter in ubiquitin) cross-link involves residue Lys173.

In terms of assembly, substrate-recognition component of the ECS(SOCS2) complex, composed of SOCS2, CUL5, ELOB, ELOC and RNF7/RBX2. Interacts with IGF1R. Interacts with DCUN1D1. In terms of processing, ubiquitinated; mediated by AREL1 and leading to its subsequent proteasomal degradation. Ubiquitination is dependent on its phosphorylation at Ser-52, by PKC. Ubiquitination is stimulated by LPS. Post-translationally, phosphorylation at Ser-52 by PKC facilitates its ubiquitination and proteasomal degradation.

Its subcellular location is the cytoplasm. It participates in protein modification; protein ubiquitination. Substrate-recognition component of a cullin-5-RING E3 ubiquitin-protein ligase complex (ECS complex, also named CRL5 complex), which mediates the ubiquitination and subsequent proteasomal degradation of target proteins, such as EPOR and GHR. Specifically recognizes and binds phosphorylated proteins via its SH2 domain, promoting their ubiquitination. The ECS(SOCS2) complex acts as a key regulator of growth hormone receptor (GHR) levels by mediating ubiquitination and degradation of GHR, following GHR phosphorylation by JAK2. The ECS(SOCS2) also catalyzes ubiquitination and degradation of JAK2-phosphorylated EPOR. The protein is Suppressor of cytokine signaling 2 (SOCS2) of Sus scrofa (Pig).